The chain runs to 94 residues: Myosuppressin (94 aa).

The N-terminal stretch at 1 to 24 (MMSPTLMILISITTMAILSGESFG) is a signal peptide. A propeptide spanning residues 25–80 (AMPAQCNSEFLEELPPRLRKICVAIARIWDAREMNDFVDDREYRENLPRYDSSVKR) is cleaved from the precursor. Q81 is subject to Pyrrolidone carboxylic acid. F90 bears the Phenylalanine amide mark.

Expressed throughout the nervous system (at protein level).

It localises to the secreted. Functionally, myoinhibiting neuropeptide. This is Myosuppressin from Camponotus floridanus (Florida carpenter ant).